The primary structure comprises 49 residues: Osteocalcin (49 aa).

The Gla domain occupies 1-47; sequence YLDPGLGAPAPYPDPLEPKREVCELNPDCDELADHIGFQEAYRRFYG. Hydroxyproline is present on Pro9. Ca(2+) is bound by residues Glu17, Glu21, Glu24, and Asp30. 4-carboxyglutamate is present on residues Glu17, Glu21, and Glu24. Cys23 and Cys29 are disulfide-bonded.

This sequence belongs to the osteocalcin/matrix Gla protein family. In terms of processing, gamma-carboxyglutamate residues are formed by vitamin K dependent carboxylation by GGCX. These residues are essential for the binding of calcium. Decarboxylation promotes the hormone activity.

The protein localises to the secreted. Its function is as follows. The carboxylated form is one of the main organic components of the bone matrix, which constitutes 1-2% of the total bone protein. It acts as a negative regulator of bone formation and is required to limit bone formation without impairing bone resorption or mineralization. The carboxylated form binds strongly to apatite and calcium. In terms of biological role, the uncarboxylated form acts as a hormone secreted by osteoblasts, which regulates different cellular processes, such as energy metabolism, male fertility and brain development. Regulates of energy metabolism by acting as a hormone favoring pancreatic beta-cell proliferation, insulin secretion and sensitivity and energy expenditure. Uncarboxylated osteocalcin hormone also promotes testosterone production in the testes: acts as a ligand for G protein-coupled receptor GPRC6A at the surface of Leydig cells, initiating a signaling response that promotes the expression of enzymes required for testosterone synthesis in a CREB-dependent manner. Also acts as a regulator of brain development: osteocalcin hormone crosses the blood-brain barrier and acts as a ligand for GPR158 on neurons, initiating a signaling response that prevents neuronal apoptosis in the hippocampus, favors the synthesis of all monoamine neurotransmitters and inhibits that of gamma-aminobutyric acid (GABA). Osteocalcin also crosses the placenta during pregnancy and maternal osteocalcin is required for fetal brain development. This is Osteocalcin (BGLAP) from Capra hircus (Goat).